We begin with the raw amino-acid sequence, 504 residues long: D-alanine--D-alanyl carrier protein ligase (504 aa).

Position 152 to 153 (threonine 152 to serine 153) interacts with ATP. Aspartate 197 contributes to the D-alanine binding site. Residue asparagine 292 to threonine 297 coordinates ATP. Residue valine 301 participates in D-alanine binding. ATP contacts are provided by residues aspartate 383, tyrosine 394–arginine 397, and lysine 492. Lysine 492 is a binding site for D-alanine.

It belongs to the ATP-dependent AMP-binding enzyme family. DltA subfamily.

The protein resides in the cytoplasm. It catalyses the reaction holo-[D-alanyl-carrier protein] + D-alanine + ATP = D-alanyl-[D-alanyl-carrier protein] + AMP + diphosphate. It participates in cell wall biogenesis; lipoteichoic acid biosynthesis. In terms of biological role, catalyzes the first step in the D-alanylation of lipoteichoic acid (LTA), the activation of D-alanine and its transfer onto the D-alanyl carrier protein (Dcp) DltC. In an ATP-dependent two-step reaction, forms a high energy D-alanyl-AMP intermediate, followed by transfer of the D-alanyl residue as a thiol ester to the phosphopantheinyl prosthetic group of the Dcp. D-alanylation of LTA plays an important role in modulating the properties of the cell wall in Gram-positive bacteria, influencing the net charge of the cell wall. The sequence is that of D-alanine--D-alanyl carrier protein ligase from Bacillus mycoides (strain KBAB4) (Bacillus weihenstephanensis).